The sequence spans 1003 residues: Cation-transporting ATPase HMA5 (1003 aa).

Positions 6–25 are disordered; the sequence is LSAVAGGGRPAAAGGGGDEM. The span at 10 to 22 shows a compositional bias: gly residues; it reads AGGGRPAAAGGGG. HMA domains are found at residues 51–117, 133–199, and 207–273; these read EEAH…FDAE, LSAQ…FEAA, and DKIL…NGRL. Positions 62, 65, 144, and 147 each coordinate Cu cation. 8 consecutive transmembrane segments (helical) span residues 302–322, 331–351, 372–392, 396–416, 562–582, 599–619, 938–958, and 966–986; these read SLFL…IPFI, GPFH…QFVV, VLVV…LLYG, GFHP…VLFG, IFVP…FLCG, FVFS…CALG, FFAM…LFPF, and WLAG…SLLL.

It belongs to the cation transport ATPase (P-type) (TC 3.A.3) family. Type IB subfamily. Expressed in root vascular cylinder, vascular bundles and mesophyll cells of leaf blades, and anther walls and microspores of stamens.

The protein resides in the cell membrane. Functionally, metal efflux transporter that may play a role in detoxification of heavy metals, such as zinc, copper, lead and cadmium, especially in the shoots. This chain is Cation-transporting ATPase HMA5, found in Oryza sativa subsp. japonica (Rice).